The following is a 503-amino-acid chain: 12-dehydrotetracycline 5-monooxygenase/anhydrotetracycline 6-monooxygenase (503 aa).

Residues threonine 13, 32–33 (ER), leucine 44, glutamine 99, valine 123, threonine 160, aspartate 288, and 301–302 (LN) contribute to the FAD site.

It belongs to the PheA/TfdB FAD monooxygenase family. In terms of assembly, monomer. The cofactor is FAD.

It carries out the reaction 5a,11a-dehydrotetracycline + NADPH + O2 + H(+) = 5a,11a-dehydrooxytetracycline + NADP(+) + H2O. The catalysed reaction is anhydrotetracycline + NADPH + O2 + H(+) = 5a,11a-dehydrotetracycline + NADP(+) + H2O. The protein operates within antibiotic biosynthesis; oxytetracycline biosynthesis. Its function is as follows. Involved in the biosynthesis of the antibiotics oxytetracycline and tetracycline. OxyS starts by catalyzing the stereospecific hydroxylation of anhydrotetracycline at C(6) position to yield 5a,11a-dehydrotetracycline (12-dehydrotetracycline). If the released product is captured by OxyR, it is reduced to tetracycline. However, if the released product is recaptured by OxyS, it performs an additional hydroxylation at C(5), producing 5a,11a-dehydrooxytetracycline, which, following the action of OxyR becomes oxytetracycline. This Streptomyces rimosus subsp. rimosus (strain ATCC 10970 / DSM 40260 / JCM 4667 / NRRL 2234) protein is 12-dehydrotetracycline 5-monooxygenase/anhydrotetracycline 6-monooxygenase.